Consider the following 1571-residue polypeptide: Neurexin-3 (1571 aa).

A signal peptide spans 1 to 27 (MSFTLHSVFFTLKVSIFLGSLVGLCLG). A Laminin G-like 1 domain is found at 28–202 (LEFMGLPNQW…SVQLEAEGPC (175 aa)). Residues 28–1496 (LEFMGLPNQW…EVIRESSSTT (1469 aa)) lie on the Extracellular side of the membrane. 2 N-linked (GlcNAc...) asparagine glycosylation sites follow: Asn-58 and Asn-105. Residues 198–235 (AEGPCGERPCENGGICFLLDGHPTCDCSTTGYGGTLCS) form the EGF-like 1 domain. Intrachain disulfides connect Cys-202–Cys-213, Cys-207–Cys-222, and Cys-224–Cys-234. 2 consecutive Laminin G-like domains span residues 258–440 (VATF…VFKC) and 447–639 (DPIN…KSSC). Residues Asp-304, Leu-321, and Met-374 each coordinate Ca(2+). 5 disulfides stabilise this stretch: Cys-404–Cys-440, Cys-610–Cys-639, Cys-647–Cys-658, Cys-652–Cys-667, and Cys-669–Cys-679. Positions 643-680 (SAKQCDSYPCKNNAVCKDGWNRFICDCTGTGYWGRTCE) constitute an EGF-like 2 domain. 2 consecutive Laminin G-like domains span residues 685 to 857 (ILSY…IDYC) and 871 to 1046 (DPVT…ERGC). Ca(2+) contacts are provided by Asp-732 and Leu-749. N-linked (GlcNAc...) asparagine glycosylation occurs at Asn-757. Arg-807 contacts Ca(2+). 4 disulfides stabilise this stretch: Cys-1018-Cys-1046, Cys-1053-Cys-1064, Cys-1058-Cys-1073, and Cys-1075-Cys-1085. Positions 1049–1086 (PSTTCQEDSCANQGVCMQQWEGFTCDCSMTSYSGNQCN) constitute an EGF-like 3 domain. Positions 1090–1290 (ATYIFGKSGG…NPNIKINGSV (201 aa)) constitute a Laminin G-like 6 domain. Residues Asp-1142 and Ile-1159 each contribute to the Ca(2+) site. N-linked (GlcNAc...) asparagine glycosylation occurs at Asn-1189. Residues Ile-1241 and Asn-1243 each coordinate Ca(2+). N-linked (GlcNAc...) asparagine glycans are attached at residues Asn-1287 and Asn-1331. Residues 1324-1348 (ATTTTRKNRSTASIQPTSDDLVSSA) are disordered. Polar residues predominate over residues 1333–1348 (STASIQPTSDDLVSSA). O-linked (Xyl...) (heparan sulfate) serine glycosylation is present at Ser-1347. The chain crosses the membrane as a helical span at residues 1497 to 1517 (GMVVGIVAAAALCILILLYAM). Over 1518-1571 (YKYRNRDEGSYQVDETRNYISNSAQSNGTLMKEKQASSKSGHKKQKNKDKEYYV) the chain is Cytoplasmic. The tract at residues 1539–1571 (NSAQSNGTLMKEKQASSKSGHKKQKNKDKEYYV) is disordered.

The protein belongs to the neurexin family. As to quaternary structure, the laminin G-like domain 2 binds to NXPH1. Specific isoforms bind to alpha-dystroglycan. The cytoplasmic C-terminal region binds to CASK. Specific isoforms bind neuroligins NLGN1, NLGN2 and NLGN3. Interacts with CLSTN3. Post-translationally, O-glycosylated; contains heparan sulfate. Heparan sulfate attachment is required for synapse development by mediating interactions with neuroligins. Brain and arteries (at protein level).

Its subcellular location is the presynaptic cell membrane. Its function is as follows. Neuronal cell surface protein that may be involved in cell recognition and cell adhesion. May mediate intracellular signaling. In Mus musculus (Mouse), this protein is Neurexin-3 (Nrxn3).